Here is a 177-residue protein sequence, read N- to C-terminus: O-acetyl-ADP-ribose deacetylase (177 aa).

The Macro domain maps to 1–175; sequence MKSRIHVLQG…LYNRLLTQQG (175 aa). Substrate is bound by residues 11 to 12, Asn-25, 33 to 35, and 122 to 126; these read DI, GVD, and STGVY. Asp-35 serves as the catalytic Proton acceptor.

Belongs to the MacroD-type family. YmdB subfamily. Homodimer. Interacts with RNase III.

The enzyme catalyses 3''-O-acetyl-ADP-D-ribose + H2O = ADP-D-ribose + acetate + H(+). The catalysed reaction is 2''-O-acetyl-ADP-D-ribose + H2O = ADP-D-ribose + acetate + H(+). Its function is as follows. Deacetylates O-acetyl-ADP ribose to yield ADP-ribose and free acetate. Down-regulates ribonuclease 3 (RNase III) activity. Acts by interacting directly with the region of the ribonuclease that is required for dimerization/activation. The polypeptide is O-acetyl-ADP-ribose deacetylase (Escherichia fergusonii (strain ATCC 35469 / DSM 13698 / CCUG 18766 / IAM 14443 / JCM 21226 / LMG 7866 / NBRC 102419 / NCTC 12128 / CDC 0568-73)).